A 234-amino-acid chain; its full sequence is Segregation and condensation protein A (234 aa).

It belongs to the ScpA family. In terms of assembly, component of a cohesin-like complex composed of ScpA, ScpB and the Smc homodimer, in which ScpA and ScpB bind to the head domain of Smc. The presence of the three proteins is required for the association of the complex with DNA.

It localises to the cytoplasm. In terms of biological role, participates in chromosomal partition during cell division. May act via the formation of a condensin-like complex containing Smc and ScpB that pull DNA away from mid-cell into both cell halves. In Streptococcus pyogenes serotype M3 (strain ATCC BAA-595 / MGAS315), this protein is Segregation and condensation protein A.